Here is a 173-residue protein sequence, read N- to C-terminus: MYSFMGGGLFCAWVGTILLVVATATDHWMQYRLSGSFAHQGLWRYCLGNKCFLQTESIAYWNATRAFMILSALCATSGIIMGVLAFAQQSTFTRLSRPFSAGIMFFASTLFVLLALAIYTGVTVSFLGRRFGDWRFSWSYILGWVALLMTFFAGIFYMCAYRMHECRRLSTPR.

At 1-3 (MYS) the chain is on the cytoplasmic side. Residues 4 to 24 (FMGGGLFCAWVGTILLVVATA) form a helical membrane-spanning segment. Residues 25-66 (TDHWMQYRLSGSFAHQGLWRYCLGNKCFLQTESIAYWNATRA) are Extracellular-facing. Trp-43 and Trp-61 each carry a C-linked (Man) tryptophan glycan. N-linked (GlcNAc...) asparagine glycosylation occurs at Asn-62. The helical transmembrane segment at 67-87 (FMILSALCATSGIIMGVLAFA) threads the bilayer. The Cytoplasmic segment spans residues 88–98 (QQSTFTRLSRP). A helical membrane pass occupies residues 99 to 119 (FSAGIMFFASTLFVLLALAIY). Topologically, residues 120 to 140 (TGVTVSFLGRRFGDWRFSWSY) are extracellular. The helical transmembrane segment at 141–161 (ILGWVALLMTFFAGIFYMCAY) threads the bilayer. At 162–173 (RMHECRRLSTPR) the chain is on the cytoplasmic side. Ser-170 is modified (phosphoserine). The residue at position 171 (Thr-171) is a Phosphothreonine.

Belongs to the PMP-22/EMP/MP20 family. As to quaternary structure, seems to be associated with itself or another lens membrane component via disulfide bonds. In terms of tissue distribution, eye lens specific.

It localises to the membrane. Its function is as follows. Present in the thicker 16-17 nm junctions of mammalian lens fiber cells, where it may contribute to cell junctional organization. Acts as a receptor for calmodulin. May play an important role in both lens development and cataractogenesis. The polypeptide is Lens fiber membrane intrinsic protein (Lim2) (Rattus norvegicus (Rat)).